The sequence spans 209 residues: dTTP/UTP pyrophosphatase (209 aa).

Aspartate 79 functions as the Proton acceptor in the catalytic mechanism.

The protein belongs to the Maf family. YhdE subfamily. Requires a divalent metal cation as cofactor.

The protein resides in the cytoplasm. It catalyses the reaction dTTP + H2O = dTMP + diphosphate + H(+). The enzyme catalyses UTP + H2O = UMP + diphosphate + H(+). Nucleoside triphosphate pyrophosphatase that hydrolyzes dTTP and UTP. May have a dual role in cell division arrest and in preventing the incorporation of modified nucleotides into cellular nucleic acids. This Bradyrhizobium diazoefficiens (strain JCM 10833 / BCRC 13528 / IAM 13628 / NBRC 14792 / USDA 110) protein is dTTP/UTP pyrophosphatase.